A 944-amino-acid chain; its full sequence is Serine/threonine-protein kinase PLK4 (944 aa).

The region spanning 12 to 265 (FKVLNLLGKG…LSSVLDHAFM (254 aa)) is the Protein kinase domain. Residues 18 to 26 (LGKGSFACV) and Lys41 contribute to the ATP site. Asp136 acts as the Proton acceptor in catalysis. Disordered stretches follow at residues 327 to 396 (KDKH…YSER), 432 to 463 (RSLE…RSND), and 530 to 561 (LGIK…QQAF). Positions 378 to 394 (RSGTSQSQTYAKPSSYS) are enriched in polar residues. Residues 432–447 (RSLERHTSPPVKEKTP) are compositionally biased toward basic and acidic residues. Residues 548–561 (FGEQSKSRVPQQAF) are compositionally biased toward polar residues. The 114-residue stretch at 565–678 (TLRSIISPLN…AKFIKLVRSK (114 aa)) folds into the Cryptic POLO box 1 (CPB1) domain. Residues 679-791 (TPKVTYYTRY…GRRPALAESP (113 aa)) enclose the Cryptic POLO box 2 (CPB2) domain. Positions 786–809 (ALAESPKTQPTPSVDSARERKEEQ) are disordered. Residues 862–940 (QVLKSVFVEN…LSSILMLFAS (79 aa)) form the POLO box domain.

It belongs to the protein kinase superfamily. Ser/Thr protein kinase family. CDC5/Polo subfamily. Homodimer. Post-translationally, ubiquitinated; leading to its degradation by the proteasome.

The protein resides in the cytoplasm. The protein localises to the cytoskeleton. Its subcellular location is the microtubule organizing center. It is found in the centrosome. It localises to the centriole. It carries out the reaction L-seryl-[protein] + ATP = O-phospho-L-seryl-[protein] + ADP + H(+). The catalysed reaction is L-threonyl-[protein] + ATP = O-phospho-L-threonyl-[protein] + ADP + H(+). Serine/threonine-protein kinase that plays a central role in centriole duplication. Able to trigger procentriole formation on the surface of the parental centriole cylinder, leading to the recruitment of centriole biogenesis proteins such as sass6, cpap, ccp110, cep135 and gamma-tubulin. When overexpressed, it is able to induce centrosome amplification through the simultaneous generation of multiple procentrioles adjoining each parental centriole during S phase. Its central role in centriole replication suggests a possible role in tumorigenesis, centrosome aberrations being frequently observed in tumors. Also involved in deuterosome-mediated centriole amplification in multiciliated that can generate more than 100 centrioles. This is Serine/threonine-protein kinase PLK4 from Xenopus laevis (African clawed frog).